Consider the following 268-residue polypeptide: Small ribosomal subunit protein uS3 (268 aa).

In terms of domain architecture, KH type-2 spans 38–106 (IRKLLATGME…QVQLNILEVK (69 aa)). The disordered stretch occupies residues 217-268 (NTAAPAGDRPRRERPSRPRRSGATGTTATSTEAGRAATATADAPATEQNQEG). The span at 237 to 268 (SGATGTTATSTEAGRAATATADAPATEQNQEG) shows a compositional bias: low complexity.

It belongs to the universal ribosomal protein uS3 family. In terms of assembly, part of the 30S ribosomal subunit. Forms a tight complex with proteins S10 and S14.

Binds the lower part of the 30S subunit head. Binds mRNA in the 70S ribosome, positioning it for translation. The sequence is that of Small ribosomal subunit protein uS3 from Rhodococcus erythropolis (strain PR4 / NBRC 100887).